We begin with the raw amino-acid sequence, 207 residues long: Myosin light chain 6B (207 aa).

The interval 1–50 (MPPKKDAPVKKPAGPSISKPAAKSTPGTPLAKAKAEPAAPQAPAKSQEPP) is disordered. Positions 36 to 50 (EPAAPQAPAKSQEPP) are enriched in low complexity. 3 consecutive EF-hand domains span residues 63 to 98 (DQLE…LGQN), 140 to 175 (GTYE…LGEK), and 175 to 207 (KMTE…ILSL).

As to quaternary structure, myosin is a hexamer of 2 heavy chains and 4 light chains.

Regulatory light chain of myosin. Does not bind calcium. The protein is Myosin light chain 6B of Mus musculus (Mouse).